Here is a 334-residue protein sequence, read N- to C-terminus: Protein-methionine-sulfoxide reductase catalytic subunit MsrP (334 aa).

The segment at residues methionine 1 to alanine 44 is a signal peptide (tat-type signal). Mo-molybdopterin is bound by residues asparagine 88, tyrosine 91 to glutamate 92, cysteine 146, threonine 181, asparagine 233, arginine 238, and glycine 249 to lysine 251.

The protein belongs to the MsrP family. In terms of assembly, heterodimer of a catalytic subunit (MsrP) and a heme-binding subunit (MsrQ). Mo-molybdopterin is required as a cofactor. Predicted to be exported by the Tat system. The position of the signal peptide cleavage has not been experimentally proven.

The protein localises to the periplasm. It catalyses the reaction L-methionyl-[protein] + a quinone + H2O = L-methionyl-(S)-S-oxide-[protein] + a quinol. The enzyme catalyses L-methionyl-[protein] + a quinone + H2O = L-methionyl-(R)-S-oxide-[protein] + a quinol. Part of the MsrPQ system that repairs oxidized periplasmic proteins containing methionine sulfoxide residues (Met-O), using respiratory chain electrons. Thus protects these proteins from oxidative-stress damage caused by reactive species of oxygen and chlorine generated by the host defense mechanisms. MsrPQ is essential for the maintenance of envelope integrity under bleach stress, rescuing a wide series of structurally unrelated periplasmic proteins from methionine oxidation, including the primary periplasmic chaperone SurA and the lipoprotein Pal. The catalytic subunit MsrP is non-stereospecific, being able to reduce both (R-) and (S-) diastereoisomers of methionine sulfoxide. The sequence is that of Protein-methionine-sulfoxide reductase catalytic subunit MsrP from Shigella dysenteriae serotype 1 (strain Sd197).